Reading from the N-terminus, the 364-residue chain is DNA replication and repair protein RecF (364 aa).

An ATP-binding site is contributed by glycine 23 to serine 30.

This sequence belongs to the RecF family.

It is found in the cytoplasm. Functionally, the RecF protein is involved in DNA metabolism; it is required for DNA replication and normal SOS inducibility. RecF binds preferentially to single-stranded, linear DNA. It also seems to bind ATP. This chain is DNA replication and repair protein RecF, found in Synechococcus sp. (strain CC9605).